The primary structure comprises 1412 residues: DNA-directed RNA polymerase subunit beta' (1412 aa).

Asp543, Asp545, and Asp547 together coordinate Mg(2+). Positions 1017, 1092, 1099, and 1102 each coordinate Zn(2+).

This sequence belongs to the RNA polymerase beta' chain family. In terms of assembly, the RNAP catalytic core consists of 2 alpha, 1 beta, 1 beta' and 1 omega subunit. When a sigma factor is associated with the core the holoenzyme is formed, which can initiate transcription. It depends on Mg(2+) as a cofactor. Zn(2+) serves as cofactor.

The enzyme catalyses RNA(n) + a ribonucleoside 5'-triphosphate = RNA(n+1) + diphosphate. Its function is as follows. DNA-dependent RNA polymerase catalyzes the transcription of DNA into RNA using the four ribonucleoside triphosphates as substrates. The protein is DNA-directed RNA polymerase subunit beta' of Mesomycoplasma hyopneumoniae (strain 7448) (Mycoplasma hyopneumoniae).